The chain runs to 142 residues: Nucleoside diphosphate kinase (142 aa).

6 residues coordinate ATP: Lys-11, Phe-59, Arg-87, Thr-93, Arg-104, and Asn-114. His-117 serves as the catalytic Pros-phosphohistidine intermediate.

The protein belongs to the NDK family. As to quaternary structure, homotetramer. Requires Mg(2+) as cofactor.

It is found in the cytoplasm. It catalyses the reaction a 2'-deoxyribonucleoside 5'-diphosphate + ATP = a 2'-deoxyribonucleoside 5'-triphosphate + ADP. It carries out the reaction a ribonucleoside 5'-diphosphate + ATP = a ribonucleoside 5'-triphosphate + ADP. Major role in the synthesis of nucleoside triphosphates other than ATP. The ATP gamma phosphate is transferred to the NDP beta phosphate via a ping-pong mechanism, using a phosphorylated active-site intermediate. The sequence is that of Nucleoside diphosphate kinase from Yersinia pestis bv. Antiqua (strain Antiqua).